Consider the following 309-residue polypeptide: Ribokinase (309 aa).

Substrate contacts are provided by residues 14-16, 42-46, and glutamate 143; these read NAD and GKGAN. Residues asparagine 187 and 223–228 contribute to the ATP site; that span reads TLGSRG. Residues aspartate 249 and isoleucine 251 each contribute to the K(+) site. Residues 254–255 and histidine 279 contribute to the ATP site; that span reads GD. Aspartate 255 is a binding site for substrate. Aspartate 255 functions as the Proton acceptor in the catalytic mechanism. The K(+) site is built by alanine 285, arginine 288, glycine 290, and serine 294.

Belongs to the carbohydrate kinase PfkB family. Ribokinase subfamily. In terms of assembly, homodimer. Requires Mg(2+) as cofactor.

The protein localises to the cytoplasm. The catalysed reaction is D-ribose + ATP = D-ribose 5-phosphate + ADP + H(+). Its pathway is carbohydrate metabolism; D-ribose degradation; D-ribose 5-phosphate from beta-D-ribopyranose: step 2/2. Activated by a monovalent cation that binds near, but not in, the active site. The most likely occupant of the site in vivo is potassium. Ion binding induces a conformational change that may alter substrate affinity. In terms of biological role, catalyzes the phosphorylation of ribose at O-5 in a reaction requiring ATP and magnesium. The resulting D-ribose-5-phosphate can then be used either for sythesis of nucleotides, histidine, and tryptophan, or as a component of the pentose phosphate pathway. The polypeptide is Ribokinase (Escherichia coli O157:H7).